The primary structure comprises 273 residues: Hydroxyethylthiazole kinase (273 aa).

Met-41 is a binding site for substrate. The ATP site is built by Arg-117 and Thr-170. Position 197 (Gly-197) interacts with substrate.

It belongs to the Thz kinase family. Mg(2+) is required as a cofactor.

It carries out the reaction 5-(2-hydroxyethyl)-4-methylthiazole + ATP = 4-methyl-5-(2-phosphooxyethyl)-thiazole + ADP + H(+). Its pathway is cofactor biosynthesis; thiamine diphosphate biosynthesis; 4-methyl-5-(2-phosphoethyl)-thiazole from 5-(2-hydroxyethyl)-4-methylthiazole: step 1/1. In terms of biological role, catalyzes the phosphorylation of the hydroxyl group of 4-methyl-5-beta-hydroxyethylthiazole (THZ). The polypeptide is Hydroxyethylthiazole kinase (Clostridium acetobutylicum (strain ATCC 824 / DSM 792 / JCM 1419 / IAM 19013 / LMG 5710 / NBRC 13948 / NRRL B-527 / VKM B-1787 / 2291 / W)).